We begin with the raw amino-acid sequence, 704 residues long: Ubiquitin-like modifier-activating enzyme atg7 (704 aa).

The short motif at 372-377 (GAGTLG) is the GXGXXG motif element. Cysteine 555 acts as the Glycyl thioester intermediate in catalysis. Residues 660 to 699 (ALTEKDYITELSGLAEVQRKAEAAANDVEWDSDEEGMEDE) are homodimerization. The disordered stretch occupies residues 682–704 (AAANDVEWDSDEEGMEDEEPELL). The segment covering 687–704 (VEWDSDEEGMEDEEPELL) has biased composition (acidic residues).

Belongs to the ATG7 family. In terms of assembly, homodimer. Interacts with ATG8 through a thioester bond between Cys-555 and the C-terminal Gly of ATG8 and with ATG12 through a thioester bond between Cys-555 and the C-terminal Gly of ATG12. Also interacts with ATG3.

The protein resides in the cytoplasm. Its subcellular location is the preautophagosomal structure. E1-like activating enzyme involved in the 2 ubiquitin-like systems required for cytoplasm to vacuole transport (Cvt) and autophagy. Activates ATG12 for its conjugation with ATG5 and ATG8 for its conjugation with phosphatidylethanolamine. Both systems are needed for the ATG8 association to Cvt vesicles and autophagosomes membranes. Autophagy is essential for maintenance of amino acid levels and protein synthesis under nitrogen starvation. Required for selective autophagic degradation of the nucleus (nucleophagy) as well as for mitophagy which contributes to regulate mitochondrial quantity and quality by eliminating the mitochondria to a basal level to fulfill cellular energy requirements and preventing excess ROS production. Required for normal mycelial growth and conidiogenesis, and regulates sclerotial formation. Plays an essential role in pathogenesis. The polypeptide is Ubiquitin-like modifier-activating enzyme atg7 (Botryotinia fuckeliana (strain T4) (Noble rot fungus)).